Consider the following 373-residue polypeptide: sn-glycerol-3-phosphate import ATP-binding protein UgpC 2 (373 aa).

Positions 4 to 234 constitute an ABC transporter domain; sequence IDIRQVRKSY…PASTFVASFI (231 aa). 36–43 is a binding site for ATP; sequence GPSGCGKS.

Belongs to the ABC transporter superfamily. sn-glycerol-3-phosphate importer (TC 3.A.1.1.3) family. In terms of assembly, the complex is composed of two ATP-binding proteins (UgpC), two transmembrane proteins (UgpA and UgpE) and a solute-binding protein (UgpB).

It localises to the cell inner membrane. The catalysed reaction is sn-glycerol 3-phosphate(out) + ATP + H2O = sn-glycerol 3-phosphate(in) + ADP + phosphate + H(+). Its function is as follows. Part of the ABC transporter complex UgpBAEC involved in sn-glycerol-3-phosphate (G3P) import. Responsible for energy coupling to the transport system. This Agrobacterium fabrum (strain C58 / ATCC 33970) (Agrobacterium tumefaciens (strain C58)) protein is sn-glycerol-3-phosphate import ATP-binding protein UgpC 2.